A 286-amino-acid polypeptide reads, in one-letter code: Aminoglycoside N(3)-acetyltransferase III (286 aa).

The protein belongs to the antibiotic N-acetyltransferase family.

It catalyses the reaction a 2-deoxystreptamine antibiotic + acetyl-CoA = an N(3)-acetyl-2-deoxystreptamine antibiotic + CoA + H(+). Functionally, resistance to antibiotics containing the 2-deoxy-streptamine ring including gentamicin, kanamycin, tobramycin, neomycin and apramycin. The chain is Aminoglycoside N(3)-acetyltransferase III (aacC3) from Salmonella sp.